Consider the following 204-residue polypeptide: Somatotropin (204 aa).

The signal sequence occupies residues 1-17 (MDRVVLMLSVLSLGVSS). A Pyrrolidone carboxylic acid modification is found at Gln-18. Position 36 (His-36) interacts with Zn(2+). A disulfide bridge connects residues Cys-69 and Cys-177. Residue Glu-186 coordinates Zn(2+). Cys-194 and Cys-202 are oxidised to a cystine.

The protein belongs to the somatotropin/prolactin family.

It localises to the secreted. Growth hormone plays an important role in growth control and is involved in the regulation of several anabolic processes. Implicated as an osmoregulatory substance important for seawater adaptation. The protein is Somatotropin (gh) of Acanthopagrus butcheri (Australian black bream).